Here is a 190-residue protein sequence, read N- to C-terminus: Potassium-transporting ATPase KdpC subunit (190 aa).

The chain crosses the membrane as a helical span at residues 10–30; the sequence is TFLFLLLITGGVYPLLTTALG.

Belongs to the KdpC family. In terms of assembly, the system is composed of three essential subunits: KdpA, KdpB and KdpC.

The protein localises to the cell inner membrane. Its function is as follows. Part of the high-affinity ATP-driven potassium transport (or Kdp) system, which catalyzes the hydrolysis of ATP coupled with the electrogenic transport of potassium into the cytoplasm. This subunit acts as a catalytic chaperone that increases the ATP-binding affinity of the ATP-hydrolyzing subunit KdpB by the formation of a transient KdpB/KdpC/ATP ternary complex. In Escherichia coli O127:H6 (strain E2348/69 / EPEC), this protein is Potassium-transporting ATPase KdpC subunit.